Reading from the N-terminus, the 418-residue chain is Gamma-glutamyl phosphate reductase (418 aa).

This sequence belongs to the gamma-glutamyl phosphate reductase family.

Its subcellular location is the cytoplasm. It catalyses the reaction L-glutamate 5-semialdehyde + phosphate + NADP(+) = L-glutamyl 5-phosphate + NADPH + H(+). The protein operates within amino-acid biosynthesis; L-proline biosynthesis; L-glutamate 5-semialdehyde from L-glutamate: step 2/2. Functionally, catalyzes the NADPH-dependent reduction of L-glutamate 5-phosphate into L-glutamate 5-semialdehyde and phosphate. The product spontaneously undergoes cyclization to form 1-pyrroline-5-carboxylate. The sequence is that of Gamma-glutamyl phosphate reductase from Geotalea uraniireducens (strain Rf4) (Geobacter uraniireducens).